A 960-amino-acid polypeptide reads, in one-letter code: Anoctamin-1 (960 aa).

Residues Met1–Ala333 are Cytoplasmic-facing. The disordered stretch occupies residues Thr92–Val115. Ser196 carries the phosphoserine modification. The helical transmembrane segment at Trp334 to Leu354 threads the bilayer. Over Tyr355–Asn406 the chain is Extracellular. Intrachain disulfides connect Cys370-Cys395, Cys379-Cys836, Cys382-Cys386, and Cys625-Cys630. A helical membrane pass occupies residues Pro407–Trp427. Glu425 is a binding site for Ca(2+). At Lys428 to Asn493 the chain is on the cytoplasmic side. Residues Leu494–Tyr514 traverse the membrane as a helical segment. Residues Arg515–Ala542 lie on the Extracellular side of the membrane. Residues Val543–Trp563 traverse the membrane as a helical segment. Residues Leu564–Thr581 lie on the Cytoplasmic side of the membrane. Residues Phe582–Phe602 traverse the membrane as a helical segment. At Lys603–Leu631 the chain is on the extracellular side. The chain crosses the membrane as a helical span at residues Met632–Leu652. The Ca(2+) site is built by Asn651, Glu654, Glu702, Glu705, Glu734, and Asp738. Residues Phe653–Leu699 lie on the Cytoplasmic side of the membrane. 2 helical membrane-spanning segments follow: residues Thr700–Phe720 and Pro721–Lys741. The Cytoplasmic segment spans residues Phe742 to Gly758. The helical transmembrane segment at Ile759–Ile779 threads the bilayer. Over Ser780–Ala866 the chain is Extracellular. Asn806 carries N-linked (GlcNAc...) asparagine glycosylation. The chain crosses the membrane as a helical span at residues Phe867 to Pro887. The Ca(2+) site is built by Asp883 and Asp888. The Cytoplasmic portion of the chain corresponds to Asp888–Leu960. The disordered stretch occupies residues Pro928 to Leu960.

The protein belongs to the anoctamin family. In terms of assembly, homodimer. Interacts with CFTR. Interacts with TRPV4. As to expression, expressed at the apical surface of the vomeronasal epithelium (at protein level). Expressed in the lateral and septal nasal glands (at protein level). Highly expressed in pulmonary bronchiole epithelial cells, pancreatic and submandibular gland acinar cells, kidney proximal tubule, all retinal cell layers, most sensory cells of dorsal root ganglia, Leydig cells and spermatocytes (at protein level). In the dorsal root ganglia, detected in small-diameter nociceptive neurons and in larger myelinated neurons (at protein level). In the dorsal root ganglia, expressed in MrgprA3-positive neurons (at protein level). In the developing brain, highly expressed in the ventricular zone and subventricular zone at 12.5 dpc and 14.5 dpc where it is detected in radial glial cells but not in neurons with expression dramatically decreased at P1 (at protein level). Highly expressed in the endometrial stroma (at protein level). In taste buds of the vallate papillae, expressed in the apical region of type I taste cells (at protein level). In the kidney, expressed in the collecting duct (at protein level). In the retina, strongly expressed in the outer and inner plexiform layers, weakly expressed in some somata in the inner nuclear layer and ganglion cell layer and not expressed in the outer nuclear layer (at protein level). Expressed in various retinal neurons including rod bipolar cells (at protein level). Expressed in eye, brain, myometrium and endometrium with higher levels in endometrium than myometrium in estrus and day 18 pregnant mice. Not detected in uterine smooth muscle cells. Expressed at high levels in the thyroid gland and gastrointestinal muscles.

It is found in the apical cell membrane. It localises to the presynapse. The enzyme catalyses chloride(in) = chloride(out). With respect to regulation, ATP and calmodulin are essential for its activation. Channel activity is inhibited by CFTR protein and by chloride inhibitors such as niflumic acid (NFA) and 4,4'-diisothiocyanatostilbene-2,2'-disulfonic acid (DIDS). Activated by heat with activation seen at temperatures above 44 degrees Celsius. Activated by BDNF in radial glial cells. In terms of biological role, calcium-activated chloride channel (CaCC). Plays a role in transepithelial anion transport and smooth muscle contraction. Required for the normal functioning of the interstitial cells of Cajal (ICCs) which generate electrical pacemaker activity in gastrointestinal smooth muscles. Acts as a major contributor to basal and stimulated chloride conductance in airway epithelial cells and plays an important role in tracheal cartilage development. Required for CFTR activation by enhancing endoplasmic reticulum Ca(2+) store release and is also required for CFTR membrane expression. Required for basal and ATP-dependent mucus secretion in airways and intestine, probably by controlling exocytosis of mucus-filled granules by providing Ca(2+) to an apical signaling compartment. Contributes to airway mucus expression induced by interleukins IL3 and IL8 and by the asthma-associated protein CLCA1 and is required for expression of mucin MUC5AC. However, was shown in another study not to be required for MUC5AC expression. Plays a role in the propagation of Ca(2+) waves in Kolliker's organ in the cochlea and contributes to the refinement of auditory brainstem circuitries prior to hearing onset. In vomeronasal sensory neurons, modulates spontaneous firing patterns in the absence of stimuli as well as the firing pattern of pheromone-evoked activity. Responsible for calcium-activated chloride channel activity in type I taste cells of the vallate papillae. Acts as a heat sensor in nociceptive neurons. In dorsal root ganglion neurons, plays a role in mediating non-histaminergic Mas-related G-protein coupled receptor (MRGPR)-dependent itching, acting as a downstream effector of MRGPRs. In the developing brain, required for the Ca(2+)-dependent process extension of radial glial cells. This chain is Anoctamin-1 (Ano1), found in Mus musculus (Mouse).